The chain runs to 302 residues: MPIVIPKKLPAFDTLKGENIFVMNKSRAFSQDIRPLKIVILNLMPNKIVTETQLLRLLGNTPLQIEITLLKTRTYASKNTSQDHLTSFYKTFEDIKNHTFDGLIITGAPIEHLQFEDVDYWEELKEVMEFSKSNVTSTMHICWGSQAGLYYHYGIPKFPTDKKIFGIFKHKIFNLKTKITRGFDDEFLVPHSRHTTVMRGDIENVPELEILAESEDAGICLVATRDRKHIFISGHLEYEKDTLKSEYFRDLDKGRSIDIPKNYFKDDNPENDPVVTWRAHAHLLFSNWLNYCVYQETPYILK.

C142 serves as the catalytic Acyl-thioester intermediate. Substrate-binding residues include K163 and S192. Residue H235 is the Proton acceptor of the active site. E237 is an active-site residue. R249 provides a ligand contact to substrate.

It belongs to the MetA family.

It localises to the cytoplasm. It carries out the reaction L-homoserine + acetyl-CoA = O-acetyl-L-homoserine + CoA. The protein operates within amino-acid biosynthesis; L-methionine biosynthesis via de novo pathway; O-acetyl-L-homoserine from L-homoserine: step 1/1. In terms of biological role, transfers an acetyl group from acetyl-CoA to L-homoserine, forming acetyl-L-homoserine. The protein is Homoserine O-acetyltransferase 1 of Ilyobacter polytropus (strain ATCC 51220 / DSM 2926 / LMG 16218 / CuHBu1).